The following is a 1412-amino-acid chain: DNA-directed RNA polymerase subunit beta' (1412 aa).

The Mg(2+) site is built by Asp-543, Asp-545, and Asp-547. Cys-1017, Cys-1092, Cys-1099, and Cys-1102 together coordinate Zn(2+).

The protein belongs to the RNA polymerase beta' chain family. In terms of assembly, the RNAP catalytic core consists of 2 alpha, 1 beta, 1 beta' and 1 omega subunit. When a sigma factor is associated with the core the holoenzyme is formed, which can initiate transcription. Mg(2+) is required as a cofactor. It depends on Zn(2+) as a cofactor.

It catalyses the reaction RNA(n) + a ribonucleoside 5'-triphosphate = RNA(n+1) + diphosphate. In terms of biological role, DNA-dependent RNA polymerase catalyzes the transcription of DNA into RNA using the four ribonucleoside triphosphates as substrates. In Mesomycoplasma hyopneumoniae (strain 232) (Mycoplasma hyopneumoniae), this protein is DNA-directed RNA polymerase subunit beta'.